A 345-amino-acid polypeptide reads, in one-letter code: MTIKPVSQERLPELLRTIPKAELHIHIEGSLEPELMFALAQRNGVSIPYPDVASLRAAYVFDNLQSFLDIYHAGTLVLRTEQDFYDMTHAYLARAAADNVLHAEIFFDPQTHTAHGVSADVVINGLYRACVDARVEFDMNASLILCFLRHLSEQEAFECLEQALPHLDKLVGVGLASSEMGHPPEKFARVFARARELGLRLVAHAGEEGPPAYIWSALDVLKVERIDHGVQAVQDPLLMARLARDRIALTVCPLSNLKLRVFPTLAAHNLGRLLEAGIVATVNSDDPSYFGGYINQNFTQTFAALGLTAQHAYQLAHNSFEASFIDDRLKRQYFDRLAGVFETFE.

The Zn(2+) site is built by His-24, His-26, and His-204. Glu-207 acts as the Proton donor in catalysis. Asp-285 lines the Zn(2+) pocket. Asp-286 contributes to the substrate binding site.

Belongs to the metallo-dependent hydrolases superfamily. Adenosine and AMP deaminases family. Adenine deaminase type 2 subfamily. The cofactor is Zn(2+).

It catalyses the reaction adenine + H2O + H(+) = hypoxanthine + NH4(+). Catalyzes the hydrolytic deamination of adenine to hypoxanthine. Plays an important role in the purine salvage pathway and in nitrogen catabolism. The sequence is that of Adenine deaminase from Albidiferax ferrireducens (strain ATCC BAA-621 / DSM 15236 / T118) (Rhodoferax ferrireducens).